A 33-amino-acid polypeptide reads, in one-letter code: Mu-theraphotoxin-Tp1a (33 aa).

3 cysteine pairs are disulfide-bonded: Cys2–Cys17, Cys9–Cys22, and Cys16–Cys29. The residue at position 33 (Ile33) is an Isoleucine amide.

Belongs to the neurotoxin 10 (Hwtx-1) family. 55 (ProTx-III) subfamily. Expressed by the venom gland.

The protein resides in the secreted. In terms of biological role, inhibits voltage-gated sodium channels without significantly altering the voltage dependence of activation or inactivation. Preferentially inhibits human Nav1.7/SCN9A (IC(50)=2.1 nM) &gt; human Nav1.6/SCN8A &gt; human Nav1.2/SCN2A &gt; human Nav1.1/SCN1A &gt; human Nav1.3/SCN3A channels. Exhibits analgesic properties by reversing spontaneous pain induced in mice by intraplantar injection with OD1 (AC P84646), a scorpion toxin that potentiates human Nav1.7/SCN9A. The polypeptide is Mu-theraphotoxin-Tp1a (Thrixopelma pruriens (Peruvian green velvet tarantula)).